The primary structure comprises 103 residues: MSGRDKGGKGLGKGGAKRHRKVLRDNIQGITKPAIRRLARRGGVKRISGLIYEETRGVLKIFLENVIRDAVTYTEHARRKTVTAMDVVYALKRQGRTLYGFGG.

The disordered stretch occupies residues 1 to 20; sequence MSGRDKGGKGLGKGGAKRHR. N-acetylserine is present on serine 2. An N6-acetyllysine mark is found at lysine 6, lysine 9, lysine 13, lysine 17, and lysine 21. A DNA-binding region spans residues 17 to 21; the sequence is KRHRK.

The protein belongs to the histone H4 family. As to quaternary structure, the nucleosome is a histone octamer containing two molecules each of H2A, H2B, H3 and H4 assembled in one H3-H4 heterotetramer and two H2A-H2B heterodimers. The octamer wraps approximately 147 bp of DNA.

Its subcellular location is the nucleus. The protein localises to the chromosome. Core component of nucleosome. Nucleosomes wrap and compact DNA into chromatin, limiting DNA accessibility to the cellular machineries which require DNA as a template. Histones thereby play a central role in transcription regulation, DNA repair, DNA replication and chromosomal stability. DNA accessibility is regulated via a complex set of post-translational modifications of histones, also called histone code, and nucleosome remodeling. In Triticum aestivum (Wheat), this protein is Histone H4 variant TH091.